The following is a 67-amino-acid chain: Large ribosomal subunit protein bL28 (67 aa).

This sequence belongs to the bacterial ribosomal protein bL28 family.

This is Large ribosomal subunit protein bL28 from Nitratiruptor sp. (strain SB155-2).